The chain runs to 497 residues: Serine hydroxymethyltransferase (497 aa).

(6S)-5,6,7,8-tetrahydrofolate contacts are provided by residues leucine 176 and 180–182 (GHL). Lysine 289 carries the post-translational modification N6-(pyridoxal phosphate)lysine.

The protein belongs to the SHMT family. Homodimer. Pyridoxal 5'-phosphate is required as a cofactor.

It is found in the cytoplasm. The enzyme catalyses (6R)-5,10-methylene-5,6,7,8-tetrahydrofolate + glycine + H2O = (6S)-5,6,7,8-tetrahydrofolate + L-serine. The protein operates within one-carbon metabolism; tetrahydrofolate interconversion. It participates in amino-acid biosynthesis; glycine biosynthesis; glycine from L-serine: step 1/1. Catalyzes the reversible interconversion of serine and glycine with tetrahydrofolate (THF) serving as the one-carbon carrier. This reaction serves as the major source of one-carbon groups required for the biosynthesis of purines, thymidylate, methionine, and other important biomolecules. Also exhibits THF-independent aldolase activity toward beta-hydroxyamino acids, producing glycine and aldehydes, via a retro-aldol mechanism. This Chlamydia trachomatis serovar A (strain ATCC VR-571B / DSM 19440 / HAR-13) protein is Serine hydroxymethyltransferase.